Reading from the N-terminus, the 309-residue chain is Heme-dependent oxidative N-demethylase beta subunit (309 aa).

The FAD-binding FR-type domain occupies S2 to H103. The 2Fe-2S ferredoxin-type domain maps to F226–L309. Positions 260, 265, 268, and 296 each coordinate [2Fe-2S] cluster.

Belongs to the PDR/VanB family. The heme-dependent oxidative N-demethylase (HODM) is a heterotetramer composed of a catalytic alpha subunit, a FMN/2Fe-2S-dependent oxidoreductase beta subunit, a gamma subunit with putative aminotransferase activity, and a delta subunit of unknown function. [2Fe-2S] cluster serves as cofactor. The cofactor is FMN.

Its function is as follows. Component of the heme-dependent oxidative N-demethylase (HODM) enzyme, that catalyzes the NADPH-dependent oxidation of dimethylamine (DMA) to methylamine (MA) and formaldehyde. Functions in bacterial methylated amine catabolism, linking alkylamine oxidation to the tetrahydrofolate C1 pool. The beta subunit of HODM binds FMN and a 2Fe-2S cluster, and likely reduces the ferric heme iron of the alpha subunit to ferrous using NADPH. The chain is Heme-dependent oxidative N-demethylase beta subunit from Ectopseudomonas mendocina (strain ymp) (Pseudomonas mendocina).